A 461-amino-acid polypeptide reads, in one-letter code: MVQRLTEFDTIAAISTPLGEGGISIVRVSGEDAVAIVNRLFKGKDLEKVPSHTINYGHIVDPATGQVIDEVMASVMLAPKTFTKEDIVEINCHGGIVVTNDILQLLLANGARMADPGEFTKRAFVNGRIDLTQAESVMDIIRAKTDKARQVAVKQLSGGLLTEIRALRQEILDVLANVEVNIDYPEYDEEEVTAQKLLACAEAVSGKIDRLLETAQEGQILRNGLKTAIVGRPNVGKSSLLNYLTQSDKAIVTDVAGTTRDTLEEFVSVKGVPLELIDTAGIHHTEDQVEKIGVERSKKAIAQADLILLLLDGSQELTEEDRQLLELTAGKKRIIVLNKTDLGQKLTAAEIAKESGSEVISTSIMMKENLDELEALIKKLFFKGIENSNDQVLVTNQRQAGLLAKAKQQLADVASGLEAGMPVDLVQIDFTGAWESLGEITGDSAPDELINDLFSQFCLGK.

3 residues coordinate (6S)-5-formyl-5,6,7,8-tetrahydrofolate: arginine 27, glutamate 89, and arginine 128. One can recognise a TrmE-type G domain in the interval 224–382 (GLKTAIVGRP…LEALIKKLFF (159 aa)). Asparagine 234 contacts K(+). Residues 234–239 (NVGKSS), 253–259 (TDVAGTT), and 278–281 (DTAG) each bind GTP. Serine 238 provides a ligand contact to Mg(2+). K(+) contacts are provided by threonine 253, valine 255, and threonine 258. Position 259 (threonine 259) interacts with Mg(2+). Lysine 461 contacts (6S)-5-formyl-5,6,7,8-tetrahydrofolate.

Belongs to the TRAFAC class TrmE-Era-EngA-EngB-Septin-like GTPase superfamily. TrmE GTPase family. In terms of assembly, homodimer. Heterotetramer of two MnmE and two MnmG subunits. K(+) is required as a cofactor.

Its subcellular location is the cytoplasm. Functionally, exhibits a very high intrinsic GTPase hydrolysis rate. Involved in the addition of a carboxymethylaminomethyl (cmnm) group at the wobble position (U34) of certain tRNAs, forming tRNA-cmnm(5)s(2)U34. The sequence is that of tRNA modification GTPase MnmE from Lactobacillus delbrueckii subsp. bulgaricus (strain ATCC BAA-365 / Lb-18).